Reading from the N-terminus, the 206-residue chain is Ribosomal RNA large subunit methyltransferase E (206 aa).

5 residues coordinate S-adenosyl-L-methionine: Gly-61, Trp-63, Asp-81, Asp-97, and Asp-122. Catalysis depends on Lys-162, which acts as the Proton acceptor.

The protein belongs to the class I-like SAM-binding methyltransferase superfamily. RNA methyltransferase RlmE family.

Its subcellular location is the cytoplasm. The catalysed reaction is uridine(2552) in 23S rRNA + S-adenosyl-L-methionine = 2'-O-methyluridine(2552) in 23S rRNA + S-adenosyl-L-homocysteine + H(+). In terms of biological role, specifically methylates the uridine in position 2552 of 23S rRNA at the 2'-O position of the ribose in the fully assembled 50S ribosomal subunit. This is Ribosomal RNA large subunit methyltransferase E from Neisseria meningitidis serogroup C / serotype 2a (strain ATCC 700532 / DSM 15464 / FAM18).